The following is a 172-amino-acid chain: Adenine phosphoribosyltransferase (172 aa).

It belongs to the purine/pyrimidine phosphoribosyltransferase family. Homodimer.

It is found in the cytoplasm. The catalysed reaction is AMP + diphosphate = 5-phospho-alpha-D-ribose 1-diphosphate + adenine. The protein operates within purine metabolism; AMP biosynthesis via salvage pathway; AMP from adenine: step 1/1. Its function is as follows. Catalyzes a salvage reaction resulting in the formation of AMP, that is energically less costly than de novo synthesis. This chain is Adenine phosphoribosyltransferase, found in Alkaliphilus oremlandii (strain OhILAs) (Clostridium oremlandii (strain OhILAs)).